We begin with the raw amino-acid sequence, 513 residues long: GMP synthase [glutamine-hydrolyzing] (513 aa).

In terms of domain architecture, Glutamine amidotransferase type-1 spans 8–198; it reads MILVLDFGSQ…VFGVCDCDGK (191 aa). Catalysis depends on Cys-85, which acts as the Nucleophile. Residues His-172 and Glu-174 contribute to the active site. The GMPS ATP-PPase domain maps to 199 to 388; it reads WSMENFIEIE…LGIPDDIVWR (190 aa). ATP is bound at residue 226 to 232; sequence SGGVDSS.

As to quaternary structure, homodimer.

It carries out the reaction XMP + L-glutamine + ATP + H2O = GMP + L-glutamate + AMP + diphosphate + 2 H(+). Its pathway is purine metabolism; GMP biosynthesis; GMP from XMP (L-Gln route): step 1/1. Functionally, catalyzes the synthesis of GMP from XMP. The sequence is that of GMP synthase [glutamine-hydrolyzing] from Bacillus pumilus (strain SAFR-032).